An 838-amino-acid polypeptide reads, in one-letter code: Envelope glycoprotein H (838 aa).

An N-terminal signal peptide occupies residues 1–18 (MGPGLWVVMGVLVGVAGG). The Virion surface portion of the chain corresponds to 21–803 (TYWTEQIDPW…DTLPIATIAP (783 aa)). N-linked (GlcNAc...) asparagine; by host glycosylation is found at Asn-73 and Asn-120. Residues 171 to 190 (GLTFPRGDDGATERHPDGRR) show a composition bias toward basic and acidic residues. Residues 171-207 (GLTFPRGDDGATERHPDGRRNAPPPGPPAGTPRHPTT) form a disordered region. 2 N-linked (GlcNAc...) asparagine; by host glycosylation sites follow: Asn-208 and Asn-216. Cys-258 and Cys-429 are joined by a disulfide. Residues 259 to 323 (DAALVRARYG…PAGPRYRVFV (65 aa)) form an interaction with gL region. Residues Asn-332, Asn-437, Asn-670, and Asn-784 are each glycosylated (N-linked (GlcNAc...) asparagine; by host). The chain crosses the membrane as a helical span at residues 804-824 (GFLAASALGVVMITAALAGIL). Residues 825–838 (RVVRTCVPFLWRRE) lie on the Intravirion side of the membrane.

This sequence belongs to the herpesviridae glycoprotein H family. In terms of assembly, interacts with glycoprotein L (gL); this interaction is necessary for the correct processing and cell surface expression of gH. The heterodimer gH/gL seems to interact with gB trimers during fusion. Interacts with host integrins ITGAV/ITGB3 to mediate viral entry into epithelial cells. Post-translationally, N-glycosylated, O-glycosylated, and sialylated.

Its subcellular location is the virion membrane. The protein localises to the host cell membrane. The protein resides in the host endosome membrane. Its function is as follows. The heterodimer glycoprotein H-glycoprotein L is required for the fusion of viral and plasma membranes leading to virus entry into the host cell. Following initial binding to host receptor, membrane fusion is mediated by the fusion machinery composed of gB and the heterodimer gH/gL. May also be involved in the fusion between the virion envelope and the outer nuclear membrane during virion morphogenesis. Interaction with host integrins ITGAV/ITGB3 triggers release of cytosolic Ca(2+) and FAK phosphorylation leading to efficient viral entry into host genital tract epithelial cells. This chain is Envelope glycoprotein H, found in Human herpesvirus 2 (strain HG52) (HHV-2).